A 220-amino-acid chain; its full sequence is Deoxyribose-phosphate aldolase (220 aa).

Asp-89 (proton donor/acceptor) is an active-site residue. The Schiff-base intermediate with acetaldehyde role is filled by Lys-152. Lys-181 serves as the catalytic Proton donor/acceptor.

It belongs to the DeoC/FbaB aldolase family. DeoC type 1 subfamily.

Its subcellular location is the cytoplasm. The catalysed reaction is 2-deoxy-D-ribose 5-phosphate = D-glyceraldehyde 3-phosphate + acetaldehyde. Its pathway is carbohydrate degradation; 2-deoxy-D-ribose 1-phosphate degradation; D-glyceraldehyde 3-phosphate and acetaldehyde from 2-deoxy-alpha-D-ribose 1-phosphate: step 2/2. Catalyzes a reversible aldol reaction between acetaldehyde and D-glyceraldehyde 3-phosphate to generate 2-deoxy-D-ribose 5-phosphate. The sequence is that of Deoxyribose-phosphate aldolase from Enterococcus faecalis (strain ATCC 700802 / V583).